The sequence spans 876 residues: Leucine--tRNA ligase (876 aa).

Residues 43-53 (PYPSGRIHIGH) carry the 'HIGH' region motif. The 'KMSKS' region motif lies at 632 to 636 (KMSKS). K635 lines the ATP pocket.

It belongs to the class-I aminoacyl-tRNA synthetase family.

It is found in the cytoplasm. It carries out the reaction tRNA(Leu) + L-leucine + ATP = L-leucyl-tRNA(Leu) + AMP + diphosphate. This chain is Leucine--tRNA ligase, found in Allorhizobium ampelinum (strain ATCC BAA-846 / DSM 112012 / S4) (Agrobacterium vitis (strain S4)).